Reading from the N-terminus, the 1211-residue chain is Homeodomain-interacting protein kinase 1 (1211 aa).

Lys25 participates in a covalent cross-link: Glycyl lysine isopeptide (Lys-Gly) (interchain with G-Cter in SUMO); alternate. Lys25 is covalently cross-linked (Glycyl lysine isopeptide (Lys-Gly) (interchain with G-Cter in SUMO2); alternate). Glycyl lysine isopeptide (Lys-Gly) (interchain with G-Cter in SUMO2) cross-links involve residues Lys120 and Lys124. Positions 190 to 518 constitute a Protein kinase domain; it reads YEVLEFLGRG…PLKTLNHQFV (329 aa). ATP contacts are provided by residues 196-204 and Lys219; that span reads LGRGTFGQV. Asp315 functions as the Proton acceptor in the catalytic mechanism. The disordered stretch occupies residues 835–856; sequence QQQSSSLPSRKNKQSAPVSSTS. The short motif at 844–847 is the Nuclear localization signal 1 (NLS1) element; sequence RKNK. Ser872 is modified (phosphoserine). Positions 885–1094 are interaction with TP53; it reads PVQDQHQPII…FQHGSPLHST (210 aa). The required for localization to nuclear speckles stretch occupies residues 891–998; it reads QPIIIPDTPS…PLKTQLGDCT (108 aa). Residues 902–926 are SUMO interaction motifs (SIM); required for nuclear localization and kinase activity; that stretch reads PVSVITIRSDTDEEEDNKFKPSSSS. A Glycyl lysine isopeptide (Lys-Gly) (interchain with G-Cter in SUMO2) cross-link involves residue Lys991. Disordered stretches follow at residues 1002–1023, 1047–1070, and 1085–1105; these read QASGLLSSSKTKPVASVSGQSS, LSQNQQSSSASTSQERSSNPAPRR, and FQHGSPLHSTGHPHLAPAPAH. Low complexity-rich tracts occupy residues 1048 to 1064 and 1096 to 1105; these read SQNQQSSSASTSQERSS and HPHLAPAPAH. Phosphoserine is present on Ser1201. A Glycyl lysine isopeptide (Lys-Gly) (interchain with G-Cter in SUMO) cross-link involves residue Lys1204.

The protein belongs to the protein kinase superfamily. CMGC Ser/Thr protein kinase family. HIPK subfamily. As to quaternary structure, interacts with Nkx1-2, Nkx2-5, MYB, PARK7, DAXX and p53/TP53. Part of a cytoplasmic complex made of HIPK1, DAB2IP and MAP3K5 in response to TNF. This complex formation promotes MAP3K5-JNK activation and subsequent apoptosis. In terms of processing, phosphorylated and activated by JNK1. Autophosphorylated. Post-translationally, sumoylated. When conjugated it is directed to nuclear speckles. SENP1-mediated desumoylation is mediated by TNF in response to stress stimuli, triggering transient translocation from nucleus to cytoplasm.

The protein localises to the nucleus. Its subcellular location is the cytoplasm. It is found in the nucleus speckle. It catalyses the reaction L-seryl-[protein] + ATP = O-phospho-L-seryl-[protein] + ADP + H(+). The enzyme catalyses L-threonyl-[protein] + ATP = O-phospho-L-threonyl-[protein] + ADP + H(+). Serine/threonine-protein kinase involved in transcription regulation and TNF-mediated cellular apoptosis. Plays a role as a corepressor for homeodomain transcription factors. Phosphorylates DAXX and MYB. Phosphorylates DAXX in response to stress, and mediates its translocation from the nucleus to the cytoplasm. Inactivates MYB transcription factor activity by phosphorylation. Prevents MAP3K5-JNK activation in the absence of TNF. TNF triggers its translocation to the cytoplasm in response to stress stimuli, thus activating nuclear MAP3K5-JNK by derepression and promoting apoptosis. May be involved in anti-oxidative stress responses. Involved in the regulation of eye size, lens formation and retinal lamination during late embryogenesis. Promotes angiogenesis and to be involved in erythroid differentiation. May be involved in malignant squamous cell tumor formation. Phosphorylates PAGE4 at 'Thr-51' which is critical for the ability of PAGE4 to potentiate the transcriptional activator activity of JUN. In Rattus norvegicus (Rat), this protein is Homeodomain-interacting protein kinase 1.